A 499-amino-acid chain; its full sequence is Lysine--tRNA ligase (499 aa).

Mg(2+)-binding residues include Glu408 and Glu415.

It belongs to the class-II aminoacyl-tRNA synthetase family. As to quaternary structure, homodimer. It depends on Mg(2+) as a cofactor.

The protein localises to the cytoplasm. The enzyme catalyses tRNA(Lys) + L-lysine + ATP = L-lysyl-tRNA(Lys) + AMP + diphosphate. The chain is Lysine--tRNA ligase from Bacillus cereus (strain B4264).